Here is a 342-residue protein sequence, read N- to C-terminus: Fatty acid desaturase 6 (342 aa).

The next 2 helical transmembrane spans lie at 39–59 (GVDC…FLCL) and 63–83 (SPLV…TLTV). The Histidine box-1 signature appears at 87-91 (HLATH). A Histidine box-2 motif is present at residues 124–128 (HVKMH). Helical transmembrane passes span 151–171 (YVYM…VAVE) and 185–205 (LGLI…VSGF). Positions 277-281 (HVEHH) match the Histidine box-3 motif.

This sequence belongs to the fatty acid desaturase type 1 family.

The protein resides in the membrane. It participates in lipid metabolism; fatty acid metabolism. This Bos taurus (Bovine) protein is Fatty acid desaturase 6 (FADS6).